A 204-amino-acid polypeptide reads, in one-letter code: AFG2-interacting ribosome maturation factor (204 aa).

In terms of assembly, part of the 55LCC heterohexameric ATPase complex. Does not associate with pre-60S ribosomal particles.

It localises to the nucleus. The protein resides in the cytoplasm. In terms of biological role, part of the 55LCC heterohexameric ATPase complex which is chromatin-associated and promotes replisome proteostasis to maintain replication fork progression and genome stability. Required for replication fork progression, sister chromatid cohesion, and chromosome stability. The ATPase activity is specifically enhanced by replication fork DNA and is coupled to cysteine protease-dependent cleavage of replisome substrates in response to replication fork damage. Uses ATPase activity to process replisome substrates in S-phase, facilitating their proteolytic turnover from chromatin to ensure DNA replication and mitotic fidelity. Involved in the cytoplasmic maturation steps of pre-60S ribosomal particles by promoting the release of shuttling protein RSL24D1/RLP24 from the pre-ribosomal particles. This Xenopus tropicalis (Western clawed frog) protein is AFG2-interacting ribosome maturation factor (airim).